Consider the following 60-residue polypeptide: Probable tautomerase SP_1017 (60 aa).

Pro-2 serves as the catalytic Proton acceptor; via imino nitrogen.

The protein belongs to the 4-oxalocrotonate tautomerase family.

The sequence is that of Probable tautomerase SP_1017 from Streptococcus pneumoniae serotype 4 (strain ATCC BAA-334 / TIGR4).